A 329-amino-acid chain; its full sequence is Flotillin-like protein FloA (329 aa).

A run of 2 helical transmembrane segments spans residues 5 to 25 and 27 to 47; these read IFLL…LSFI and LGLW…TLVG.

Belongs to the flotillin-like FloA family. Homooligomerizes.

It localises to the cell membrane. Its subcellular location is the membrane raft. Its function is as follows. Found in functional membrane microdomains (FMM) that may be equivalent to eukaryotic membrane rafts. FMMs are highly dynamic and increase in number as cells age. Flotillins are thought to be important factors in membrane fluidity. This Thermoanaerobacter sp. (strain X514) protein is Flotillin-like protein FloA.